The primary structure comprises 434 residues: Probable G-protein coupled receptor B0563.6 (434 aa).

N-linked (GlcNAc...) asparagine glycosylation is present at N12. 2 helical membrane passes run 30–50 (VLPC…MVLA) and 65–85 (LAVA…TEYL). An N-linked (GlcNAc...) asparagine glycan is attached at N88. A run of 2 helical transmembrane segments spans residues 105–125 (LMLT…VALS) and 147–167 (ATRA…PYAI). Residue N181 is glycosylated (N-linked (GlcNAc...) asparagine). Transmembrane regions (helical) follow at residues 208 to 228 (ILRF…MIAF) and 258 to 278 (GGTV…LLLI). Residues N429 and N430 are each glycosylated (N-linked (GlcNAc...) asparagine).

The protein belongs to the G-protein coupled receptor 1 family.

Its subcellular location is the cell membrane. Functionally, not known. Putative receptor. The chain is Probable G-protein coupled receptor B0563.6 from Caenorhabditis elegans.